A 697-amino-acid chain; its full sequence is tRNA 5-methylaminomethyl-2-thiouridine biosynthesis bifunctional protein MnmC (697 aa).

Residues 1–272 (MPKPASMAMN…KREMLTAVMS (272 aa)) form a tRNA (mnm(5)s(2)U34)-methyltransferase region. The FAD-dependent cmnm(5)s(2)U34 oxidoreductase stretch occupies residues 300 to 697 (IGAGVAGLLT…HKHKTRQAVI (398 aa)).

The protein in the N-terminal section; belongs to the methyltransferase superfamily. tRNA (mnm(5)s(2)U34)-methyltransferase family. In the C-terminal section; belongs to the DAO family. Requires FAD as cofactor.

It is found in the cytoplasm. The catalysed reaction is 5-aminomethyl-2-thiouridine(34) in tRNA + S-adenosyl-L-methionine = 5-methylaminomethyl-2-thiouridine(34) in tRNA + S-adenosyl-L-homocysteine + H(+). Catalyzes the last two steps in the biosynthesis of 5-methylaminomethyl-2-thiouridine (mnm(5)s(2)U) at the wobble position (U34) in tRNA. Catalyzes the FAD-dependent demodification of cmnm(5)s(2)U34 to nm(5)s(2)U34, followed by the transfer of a methyl group from S-adenosyl-L-methionine to nm(5)s(2)U34, to form mnm(5)s(2)U34. This is tRNA 5-methylaminomethyl-2-thiouridine biosynthesis bifunctional protein MnmC from Psychrobacter cryohalolentis (strain ATCC BAA-1226 / DSM 17306 / VKM B-2378 / K5).